The following is a 468-amino-acid chain: GTPase Der (468 aa).

EngA-type G domains follow at residues 3 to 169 (PVMA…SPPD) and 199 to 372 (IRLA…KAAT). Residues 9-16 (GRANVGKS), 56-60 (DTGGF), 119-122 (NKAE), 205-212 (GRPNVGKS), 252-256 (DTAGL), and 317-320 (NKWD) contribute to the GTP site. Positions 373–457 (CKMSTPVLTR…PLRIELKTSH (85 aa)) constitute a KH-like domain.

Belongs to the TRAFAC class TrmE-Era-EngA-EngB-Septin-like GTPase superfamily. EngA (Der) GTPase family. As to quaternary structure, associates with the 50S ribosomal subunit.

GTPase that plays an essential role in the late steps of ribosome biogenesis. In Verminephrobacter eiseniae (strain EF01-2), this protein is GTPase Der.